We begin with the raw amino-acid sequence, 124 residues long: Histone H2B (124 aa).

A disordered region spans residues 1-33 (MPEPAKSAPKKGSKKAVTKTAGKGGKKRKRSRK). Residues Lys-6 and Lys-11 each carry the N6-acetyllysine modification. The segment covering 8 to 17 (APKKGSKKAV) has biased composition (basic residues). Position 13 is a phosphoserine (Ser-13). 2 positions are modified to N6-acetyllysine: Lys-14 and Lys-19. O-linked (GlcNAc) serine glycosylation is present at Ser-111. A Glycyl lysine isopeptide (Lys-Gly) (interchain with G-Cter in ubiquitin) cross-link involves residue Lys-119.

Belongs to the histone H2B family. In terms of assembly, the nucleosome is a histone octamer containing two molecules each of H2A, H2B, H3 and H4 assembled in one H3-H4 heterotetramer and two H2A-H2B heterodimers. The octamer wraps approximately 147 bp of DNA. In terms of processing, monoubiquitination of Lys-119 by BRE1 gives a specific tag for epigenetic transcriptional activation and is also prerequisite for histone H3 'Lys-4' and 'Lys-79' methylation. Post-translationally, phosphorylated during apoptosis; which facilitates apoptotic chromatin condensation. GlcNAcylation at Ser-111 promotes monoubiquitination of Lys-119. It fluctuates in response to extracellular glucose, and associates with transcribed genes.

The protein localises to the nucleus. It is found in the chromosome. In terms of biological role, core component of nucleosome. Nucleosomes wrap and compact DNA into chromatin, limiting DNA accessibility to the cellular machineries which require DNA as a template. Histones thereby play a central role in transcription regulation, DNA repair, DNA replication and chromosomal stability. DNA accessibility is regulated via a complex set of post-translational modifications of histones, also called histone code, and nucleosome remodeling. This is Histone H2B from Oncorhynchus mykiss (Rainbow trout).